The chain runs to 49 residues: Protein OPG059 (49 aa).

Methionine 1 is a topological domain (virion surface). A helical membrane pass occupies residues 2-22 (VIGLVIFVSVAATIVGVLSNV). The Intravirion segment spans residues 23-49 (LDMIMYVEENNEEDAKIKEEQELLLLY).

Belongs to the orthopoxvirus OPG059 family.

The protein resides in the virion membrane. It localises to the host membrane. Its function is as follows. May play a role in cell adhesion and is important for virus virulence in vivo, although it is not required for the virus life cycle in cell cultures. The protein is Protein OPG059 (OPG059) of Cynomys gunnisoni (Gunnison's prairie dog).